Consider the following 153-residue polypeptide: Probable Brix domain-containing ribosomal biogenesis protein (153 aa).

Residues 1–153 (MQVLTTSRKP…RILKISRSSR (153 aa)) enclose the Brix domain.

Its function is as follows. Probably involved in the biogenesis of the ribosome. The sequence is that of Probable Brix domain-containing ribosomal biogenesis protein from Archaeoglobus fulgidus (strain ATCC 49558 / DSM 4304 / JCM 9628 / NBRC 100126 / VC-16).